We begin with the raw amino-acid sequence, 542 residues long: Thermosome subunit alpha (542 aa).

Belongs to the TCP-1 chaperonin family. Forms a Heterooligomeric complex of two stacked eight-membered rings.

Functionally, molecular chaperone; binds unfolded polypeptides in vitro, and has a weak ATPase activity. This chain is Thermosome subunit alpha (thsA), found in Methanothermobacter thermautotrophicus (strain ATCC 29096 / DSM 1053 / JCM 10044 / NBRC 100330 / Delta H) (Methanobacterium thermoautotrophicum).